We begin with the raw amino-acid sequence, 141 residues long: MVHSQLPVAAPLRLLCALLLLPSATMIPGGLYPRSVTDPDVQEAAECAVQEYNALSANAYYYKQLRIVEAQSQVVTGAKYYLTMELMKTKCAKTTGKPKVYKEIQNCELPPKAQQEKLTCHFQVWSRPWLQKIELTKMSCN.

Positions 1-26 are cleaved as a signal peptide; sequence MVHSQLPVAAPLRLLCALLLLPSATM. In terms of domain architecture, Cystatin spans 29–129; it reads GGLYPRSVTD…CHFQVWSRPW (101 aa). The Secondary area of contact motif lies at 73 to 77; it reads QVVTG. 2 disulfides stabilise this stretch: Cys91-Cys107 and Cys120-Cys140.

This sequence belongs to the cystatin family. Expressed by the venom gland at an extremely low level (at protein level).

The protein resides in the secreted. Functionally, inhibits various C1 cysteine proteases including cathepsin L, papain and cathepsin B. This protein has no toxic activity and its function in the venom is unknown. It may play a role as a housekeeping or regulatory protein. In Tropidechis carinatus (Australian rough-scaled snake), this protein is Cystatin.